The primary structure comprises 507 residues: Putative histone deacetylase 2 (507 aa).

The tract at residues 29-342 (RNVAYYYHKD…WALETGVILG (314 aa)) is histone deacetylase. Histidine 162 is a catalytic residue. A disordered region spans residues 444-507 (EECFVEEDSK…RKDLNIPGIP (64 aa)). The segment covering 482–501 (SHSDVIEEAKYEDRDRRKDL) has biased composition (basic and acidic residues).

The protein belongs to the histone deacetylase family. HD type 1 subfamily. May be a component of a histone deacetylase complex containing saeg-2, saeg-1 and hda-2.

It is found in the nucleus. The catalysed reaction is N(6)-acetyl-L-lysyl-[histone] + H2O = L-lysyl-[histone] + acetate. Probably responsible for the deacetylation of lysine residues on the N-terminal part of the core histones (H2A, H2B, H3 and H4). Histone deacetylation gives a tag for epigenetic repression and plays an important role in transcriptional regulation, cell cycle progression and developmental events. Histone deacetylases act via the formation of large multiprotein complexes. As a likely component of a histone deacetylase complex, together with saeg-1 and hda-2, functions downstream of the cAMP-dependent kinase egl-4 to regulate the expression of genes required for egg-laying and forgaging. The polypeptide is Putative histone deacetylase 2 (hda-2) (Caenorhabditis elegans).